Here is a 226-residue protein sequence, read N- to C-terminus: Phosphate propanoyltransferase (226 aa).

44–46 (VSN) is a CoA binding site. Residues H48 and H50 each coordinate Zn(2+). Positions 72, 90, and 97 each coordinate CoA. R103 is a phosphate binding site. Position 109 (E109) interacts with Zn(2+). F116 provides a ligand contact to CoA. 3 residues coordinate Zn(2+): H157, H159, and H204. A CoA-binding site is contributed by N211.

It belongs to the PduL family. As to quaternary structure, full-length protein forms large oligomers. Homodimer, when purified in the absence of the encapsulation peptide (EP, residues 1-47). The EP may influence oligomerization. It depends on Zn(2+) as a cofactor.

It localises to the bacterial microcompartment. It carries out the reaction propanoyl-CoA + phosphate = propanoyl phosphate + CoA. It participates in polyol metabolism; 1,2-propanediol degradation. Its function is as follows. Involved in 1,2-propanediol (1,2-PD) utilization within the bacterial microcompartment (BMC) dedicated to 1,2-PD degradation by catalyzing the conversion of propanoyl-CoA to propanoyl-phosphate. CoA is regenerated within the pdu BMC (for use by PduP) via this enzyme, although there must also be cofactor transport across the BMC. Directly targeted to the BMC. Phosphate is probably the first substrate to bind in the forward direction. CoA is probably the first substrate to bind in the reverse direction, and might bind to the enzyme as the BMC assembles, ensuring cofactor encapsulation. This is Phosphate propanoyltransferase from Rhodopseudomonas palustris (strain BisB18).